The chain runs to 156 residues: Endoribonuclease YbeY (156 aa).

H117, H121, and H127 together coordinate Zn(2+).

It belongs to the endoribonuclease YbeY family. The cofactor is Zn(2+).

It is found in the cytoplasm. Its function is as follows. Single strand-specific metallo-endoribonuclease involved in late-stage 70S ribosome quality control and in maturation of the 3' terminus of the 16S rRNA. The protein is Endoribonuclease YbeY of Shewanella piezotolerans (strain WP3 / JCM 13877).